A 301-amino-acid chain; its full sequence is Ribonuclease H2 subunit A (301 aa).

Position 1 is an N-acetylmethionine (methionine 1). One can recognise an RNase H type-2 domain in the interval 28-251 (PCVLGVDEAG…AQAILEKEAE (224 aa)). Residues aspartate 34, glutamate 35, and aspartate 142 each contribute to the a divalent metal cation site. A Phosphothreonine modification is found at threonine 217. A compositionally biased stretch (acidic residues) spans 255–264 (WEDSEAEEDP). Residues 255-284 (WEDSEAEEDPERPGKITSYFSQGPQTCRPQ) form a disordered region. Serine 258 is subject to Phosphoserine. Polar residues predominate over residues 272–282 (SYFSQGPQTCR).

Belongs to the RNase HII family. Eukaryotic subfamily. As to quaternary structure, the RNase H2 complex is a heterotrimer composed of the catalytic subunit RNASEH2A and the non-catalytic subunits RNASEH2B and RNASEH2C. It depends on Mn(2+) as a cofactor. Mg(2+) serves as cofactor.

The protein resides in the nucleus. It catalyses the reaction Endonucleolytic cleavage to 5'-phosphomonoester.. In terms of biological role, catalytic subunit of RNase HII, an endonuclease that specifically degrades the RNA of RNA:DNA hybrids. Participates in DNA replication, possibly by mediating the removal of lagging-strand Okazaki fragment RNA primers during DNA replication. Mediates the excision of single ribonucleotides from DNA:RNA duplexes. This chain is Ribonuclease H2 subunit A (Rnaseh2a), found in Mus musculus (Mouse).